Here is a 242-residue protein sequence, read N- to C-terminus: Probable ABC transporter ATP-binding protein PEB1C (242 aa).

Residues 2 to 236 enclose the ABC transporter domain; it reads IELKNVNKYY…PKTERARLFL (235 aa). An ATP-binding site is contributed by 34–41; the sequence is GPSGSGKS.

This sequence belongs to the ABC transporter superfamily.

The protein resides in the cell inner membrane. In terms of biological role, most probably involved, with PEB1, in a binding-protein-dependent transport system for an amino acid. Probably responsible for energy coupling to the transport system. In Campylobacter jejuni subsp. jejuni serotype O:2 (strain ATCC 700819 / NCTC 11168), this protein is Probable ABC transporter ATP-binding protein PEB1C (peb1C).